A 578-amino-acid chain; its full sequence is Frizzled and smoothened-like protein Q (578 aa).

An N-terminal signal peptide occupies residues 1–23 (MKNSFLINILIIYYLFIILFVNS). Residues 24 to 233 (QDLKLGGSCE…GKTKILDRTN (210 aa)) are Extracellular-facing. The FZ domain maps to 27–157 (KLGGSCELID…GAPMFPINST (131 aa)). Cystine bridges form between cysteine 32–cysteine 95, cysteine 41–cysteine 88, cysteine 79–cysteine 128, and cysteine 121–cysteine 141. Asparagine 46, asparagine 64, asparagine 99, and asparagine 104 each carry an N-linked (GlcNAc...) asparagine glycan. N-linked (GlcNAc...) asparagine glycans are attached at residues asparagine 144, asparagine 155, asparagine 181, and asparagine 233. Residues 234 to 254 (YTLTSISFITCIFMILTFGVL) form a helical membrane-spanning segment. Topologically, residues 255 to 261 (PNKITHR) are cytoplasmic. A helical membrane pass occupies residues 262–282 (MESILSFACGGCITALSLFIQ). Residues 283–305 (SRQDNFNCSSDPGRFKSQSDYLC) lie on the Extracellular side of the membrane. Residue asparagine 289 is glycosylated (N-linked (GlcNAc...) asparagine). Residues 306–326 (LLTGLIFQFGAITSIFWSPMI) traverse the membrane as a helical segment. At 327-341 (AYDFYITSTLGKIRK) the chain is on the cytoplasmic side. A helical transmembrane segment spans residues 342-362 (FGLYRIVLWSFIFVLTALPAF). Residues 363 to 388 (GGKYSATVATNCWINSDDGSAWQYVS) lie on the Extracellular side of the membrane. The helical transmembrane segment at 389–409 (FYIPSWCAMGLICLFSILSVI) threads the bilayer. Topologically, residues 410–422 (NVSKMYIQTPNNR) are cytoplasmic. The chain crosses the membrane as a helical span at residues 423–443 (ILFFNIKILITLLLFLFVLTF). Topologically, residues 444 to 490 (ASSLKFYMEERMDTYFDAIAVWVECIGKGDPSQCELHAPGYDLKALN) are extracellular. The helical transmembrane segment at 491 to 511 (IVVIGILGFTVFIGYGLDPIV) threads the bilayer. Residues 512 to 578 (IHIWMESKKF…LKSTEINQQP (67 aa)) are Cytoplasmic-facing. The segment covering 544 to 556 (NNNNNETASTSSG) has biased composition (low complexity). Residues 544–578 (NNNNNETASTSSGNERKQTTVKMSNLKSTEINQQP) are disordered. A compositionally biased stretch (polar residues) spans 563–578 (TVKMSNLKSTEINQQP).

Belongs to the G-protein coupled receptor Fz/Smo family.

Its subcellular location is the membrane. The polypeptide is Frizzled and smoothened-like protein Q (fslQ) (Dictyostelium discoideum (Social amoeba)).